A 415-amino-acid polypeptide reads, in one-letter code: Squalene synthase clz20 (415 aa).

The N-linked (GlcNAc...) asparagine glycan is linked to Asn-114. The chain crosses the membrane as a helical span at residues 395–415 (ADTMYLAVLVLGVFGVVAAIL).

Belongs to the phytoene/squalene synthase family. Mg(2+) serves as cofactor.

It is found in the membrane. The catalysed reaction is 2 (2E,6E)-farnesyl diphosphate + NADH + H(+) = squalene + 2 diphosphate + NAD(+). It carries out the reaction 2 (2E,6E)-farnesyl diphosphate + NADPH + H(+) = squalene + 2 diphosphate + NADP(+). Its pathway is terpene metabolism; lanosterol biosynthesis; lanosterol from farnesyl diphosphate: step 1/3. Its function is as follows. Squalene synthase; part of the gene cluster that mediates the biosynthesis of squalestatin S1 (SQS1, also known as zaragozic acid A), a heavily oxidized fungal polyketide that offers potent cholesterol lowering activity by targeting squalene synthase (SS). Catalyzes the condensation of 2 two farnesyl pyrophosphate moieties to form squalene. The presence of a gene encoding a squalene synthase supports the identification of the cluster as being responsible for SQS1 production and suggests a likely mechanism for self-resistance. The polypeptide is Squalene synthase clz20 (Cochliobolus lunatus (Filamentous fungus)).